Reading from the N-terminus, the 551-residue chain is FGGY carbohydrate kinase domain-containing protein (551 aa).

The protein belongs to the FGGY kinase family. Expressed in kidney, lung and small intestine and to a lower extent in liver and detected in cerebrospinal fluid (at protein level).

The catalysed reaction is D-ribulose + ATP = D-ribulose 5-phosphate + ADP + H(+). It functions in the pathway carbohydrate metabolism; pentose and glucuronate interconversion. In terms of biological role, catalyzes ATP-dependent phosphorylation of D-ribulose at C-5 to form D-ribulose 5-phosphate. Postulated to function in a metabolite repair mechanism by preventing toxic accumulation of free D-ribulose formed by non-specific phosphatase activities. Alternatively, may play a role in regulating D-ribulose 5-phosphate recycling in the pentose phosphate pathway. Can phosphorylate ribitol with low efficiency. This Homo sapiens (Human) protein is FGGY carbohydrate kinase domain-containing protein.